A 563-amino-acid polypeptide reads, in one-letter code: Arginine--tRNA ligase (563 aa).

Positions 121-131 (PNIAKPFSIGH) match the 'HIGH' region motif.

This sequence belongs to the class-I aminoacyl-tRNA synthetase family. As to quaternary structure, monomer.

Its subcellular location is the cytoplasm. It catalyses the reaction tRNA(Arg) + L-arginine + ATP = L-arginyl-tRNA(Arg) + AMP + diphosphate. This Streptococcus pneumoniae serotype 19F (strain G54) protein is Arginine--tRNA ligase.